The sequence spans 375 residues: Growth/differentiation factor 8 (375 aa).

The signal sequence occupies residues 1–18; it reads MQKLQISVYIYLFVLILA. Residues 19–266 constitute a propeptide that is removed on maturation; sequence GPVDLNENSE…VTDTPKRSRR (248 aa). An N-linked (GlcNAc...) asparagine glycan is attached at asparagine 71. Intrachain disulfides connect cysteine 272–cysteine 282, cysteine 281–cysteine 340, cysteine 309–cysteine 372, and cysteine 313–cysteine 374.

Belongs to the TGF-beta family. In terms of assembly, homodimer; disulfide-linked. Interacts with WFIKKN2, leading to inhibit its activity. Interacts with FSTL3. Synthesized as large precursor molecule that undergoes proteolytic cleavage to generate an N-terminal propeptide and a disulfide linked C-terminal dimer, which is the biologically active molecule. The circulating form consists of a latent complex of the C-terminal dimer and other proteins, including its propeptide, which maintain the C-terminal dimer in a latent, inactive state. Ligand activation requires additional cleavage of the prodomain by a tolloid-like metalloproteinase.

Its subcellular location is the secreted. Acts specifically as a negative regulator of skeletal muscle growth. The sequence is that of Growth/differentiation factor 8 (MSTN) from Equus caballus (Horse).